Here is a 638-residue protein sequence, read N- to C-terminus: Phenylethylamine oxidase (638 aa).

A propeptide spanning residues Met1–Thr2 is cleaved from the precursor. Tyr296–Tyr307 is a binding site for substrate. Residue Asp298 is the Proton acceptor of the active site. An intrachain disulfide couples Cys317 to Cys343. Substrate is bound at residue Ile379–Tyr384. The Schiff-base intermediate with substrate; via topaquinone role is filled by Tyr382. The residue at position 382 (Tyr382) is a 2',4',5'-topaquinone. Cu cation-binding residues include His431, His433, and His592.

It belongs to the copper/topaquinone oxidase family. As to quaternary structure, homodimer. The cofactor is Cu cation. It depends on L-topaquinone as a cofactor. Post-translationally, topaquinone (TPQ) is generated by copper-dependent autoxidation of a specific tyrosyl residue.

The enzyme catalyses a primary methyl amine + O2 + H2O = an aldehyde + H2O2 + NH4(+). It catalyses the reaction 2-phenylethylamine + O2 + H2O = 2-phenylacetaldehyde + H2O2 + NH4(+). Functionally, catalyzes the oxidative deamination of phenylethylamine to phenylacetaldehyde with the concomitant production of hydrogen peroxide and ammonia. The protein is Phenylethylamine oxidase of Arthrobacter globiformis.